The sequence spans 434 residues: MSILKIHAREIFDSRGNPTVEVDLFTSKGLFRAAVPSGASTGIYEALELRDNDKTRYMGKGVSKAVEHINKTIAPALVSKKLNVTEQEKIDKLMIEMDGTENKSKFGANAILGVSLAVCKAGAVEKGVPLYRHIADLAGNSEVILPVPAFNVINGGSHAGNKLAMQEFMILPVGAANFREAMRIGAEVYHNLKNVIKEKYGKDATNVGDEGGFAPNILENKEGLELLKTAIGKAGYTDKVVIGMDVAASEFFRSGKYDLDFKSPDDPSRYISPDQLADLYKSFIKDYPVVSIEDPFDQDDWGAWQKFTASAGIQVVGDDLTVTNPKRIAKAVNEKSCNCLLLKVNRIGSVTESLQACKLAQANGWGVMVSHRSGETEDTFIADLVVGLCTGQIKTGAPCRSERLAKYNQLLRIEEELGSKAKFAGRNFRNPLAK.

Ser-2 is subject to N-acetylserine. Lys-5 is subject to N6-acetyllysine. At Ser-27 the chain carries Phosphoserine. Residue Ser-40 participates in Mg(2+) binding. Position 44 is a phosphotyrosine (Tyr-44). Lys-60 is modified (N6-acetyllysine; alternate). Lys-60 carries the N6-succinyllysine; alternate modification. Residues Lys-64 and Lys-71 each carry the N6-acetyllysine modification. Position 89 is an N6-acetyllysine; alternate (Lys-89). Position 89 is an N6-succinyllysine; alternate (Lys-89). Lys-92 and Lys-126 each carry N6-acetyllysine. Residues His-158 and Glu-167 each coordinate substrate. Residues Lys-193 and Lys-199 each carry the N6-acetyllysine modification. Lys-202 bears the N6-acetyllysine; alternate mark. A Glycyl lysine isopeptide (Lys-Gly) (interchain with G-Cter in SUMO2); alternate cross-link involves residue Lys-202. The Proton donor role is filled by Glu-210. 2 positions are modified to N6-acetyllysine; alternate: Lys-228 and Lys-233. At Lys-228 the chain carries N6-succinyllysine; alternate. Lys-228 is subject to N6-(2-hydroxyisobutyryl)lysine; alternate. N6-malonyllysine; alternate is present on Lys-233. Asp-245 is a Mg(2+) binding site. Ser-254 carries the post-translational modification Phosphoserine. Residue Lys-256 is modified to N6-acetyllysine. Phosphoserine occurs at positions 263 and 272. Lys-281 bears the N6-acetyllysine; alternate mark. N6-(2-hydroxyisobutyryl)lysine; alternate is present on Lys-281. N6-acetyllysine is present on Lys-285. At Tyr-287 the chain carries Phosphotyrosine. Ser-291 bears the Phosphoserine mark. Mg(2+)-binding residues include Glu-293 and Asp-318. Positions 293 and 318 each coordinate substrate. Lys-335 and Lys-343 each carry N6-acetyllysine. The active-site Proton acceptor is the Lys-343. Substrate-binding positions include 370-373 (SHRS) and Lys-394. The segment at 405 to 434 (AKYNQLLRIEEELGSKAKFAGRNFRNPLAK) is required for interaction with PLG. Lys-406 is modified (N6-acetyllysine). Lys-420 is modified (N6-acetyllysine; alternate). An N6-succinyllysine; alternate modification is found at Lys-420. Residue Lys-420 is modified to N6-malonyllysine; alternate.

The protein belongs to the enolase family. Mammalian enolase is composed of 3 isozyme subunits, alpha, beta and gamma, which can form homodimers or heterodimers which are cell-type and development-specific. ENO1 interacts with PLG in the neuronal plasma membrane and promotes its activation. The C-terminal lysine is required for this binding. Interacts with ENO4 and PGAM2. Interacts with CMTM6. It depends on Mg(2+) as a cofactor. Post-translationally, ISGylated. Lysine 2-hydroxyisobutyrylation (Khib) by p300/EP300 activates the phosphopyruvate hydratase activity.

The protein localises to the cytoplasm. The protein resides in the cell membrane. The catalysed reaction is (2R)-2-phosphoglycerate = phosphoenolpyruvate + H2O. It functions in the pathway carbohydrate degradation; glycolysis; pyruvate from D-glyceraldehyde 3-phosphate: step 4/5. Functionally, glycolytic enzyme the catalyzes the conversion of 2-phosphoglycerate to phosphoenolpyruvate. In addition to glycolysis, involved in various processes such as growth control, hypoxia tolerance and allergic responses. May also function in the intravascular and pericellular fibrinolytic system due to its ability to serve as a receptor and activator of plasminogen on the cell surface of several cell-types such as leukocytes and neurons. Stimulates immunoglobulin production. The sequence is that of Alpha-enolase (ENO1) from Pongo abelii (Sumatran orangutan).